The primary structure comprises 398 residues: MWTLVLNSGSSSLKFALLNPASGEVRLSGLAERLGTPAAAVKLEHSGQQESRSLEGGSYDAALGEVLRELETLGMRSAVRAVGHRVVHGGERFSAPVLVTPEVLEAVRACVPLAPLHNPANIVGIEAAQQAFPKLPHVAVFDTAFHQTMPEVAYRYAVPEAWYSQHGVRRYGFHGTSHAYVAGRAAEMLQRPLPTLNLITAHLGNGASVCAVAGGRSVDTSMGLTPLEGLIMGSRSGDVDPGLHDYLARQAGLSLSEITAALNKESGLLGLSGLTNDMRELEKAALTGHRGARLALGAFIYRLAKCMAGMAVALGRVDGVVFTGGIGENSRTVRGETLRRLGVLGLHLDEEANKALPRGDVGVISLPGGPVALVIPTHEELMIARETAVIVGGRGYAL.

Asparagine 7 is a binding site for Mg(2+). Lysine 14 contributes to the ATP binding site. A substrate-binding site is contributed by arginine 85. Aspartate 142 acts as the Proton donor/acceptor in catalysis. Residues histidine 202–glycine 206, aspartate 277–arginine 279, and glycine 325–asparagine 329 contribute to the ATP site. Glutamate 379 is a binding site for Mg(2+).

The protein belongs to the acetokinase family. As to quaternary structure, homodimer. The cofactor is Mg(2+). Requires Mn(2+) as cofactor.

The protein localises to the cytoplasm. The catalysed reaction is acetate + ATP = acetyl phosphate + ADP. The protein operates within metabolic intermediate biosynthesis; acetyl-CoA biosynthesis; acetyl-CoA from acetate: step 1/2. Its function is as follows. Catalyzes the formation of acetyl phosphate from acetate and ATP. Can also catalyze the reverse reaction. The polypeptide is Acetate kinase (Deinococcus radiodurans (strain ATCC 13939 / DSM 20539 / JCM 16871 / CCUG 27074 / LMG 4051 / NBRC 15346 / NCIMB 9279 / VKM B-1422 / R1)).